The sequence spans 280 residues: Pantothenate synthetase (280 aa).

30 to 37 (MGALHEGH) contributes to the ATP binding site. Residue His-37 is the Proton donor of the active site. Position 61 (Gln-61) interacts with (R)-pantoate. Residue Gln-61 coordinates beta-alanine. Residue 147–150 (GQKD) coordinates ATP. Residue Gln-153 participates in (R)-pantoate binding. ATP is bound by residues Val-176 and 184–187 (MSSR).

Belongs to the pantothenate synthetase family. In terms of assembly, homodimer.

The protein localises to the cytoplasm. It carries out the reaction (R)-pantoate + beta-alanine + ATP = (R)-pantothenate + AMP + diphosphate + H(+). It participates in cofactor biosynthesis; (R)-pantothenate biosynthesis; (R)-pantothenate from (R)-pantoate and beta-alanine: step 1/1. In terms of biological role, catalyzes the condensation of pantoate with beta-alanine in an ATP-dependent reaction via a pantoyl-adenylate intermediate. The sequence is that of Pantothenate synthetase from Thermodesulfovibrio yellowstonii (strain ATCC 51303 / DSM 11347 / YP87).